The chain runs to 144 residues: Neuritin-B (144 aa).

An N-terminal signal peptide occupies residues 1–27 (MGLKLSGRYIFLVLAVHLAYLLQAVKA). Ser-114 carries GPI-anchor amidated serine lipidation. Residues 115-144 (TGAPGPRLLFPAFLPLLIVFLSALLNWVLQ) constitute a propeptide, removed in mature form.

This sequence belongs to the neuritin family.

The protein resides in the cell membrane. Functionally, modulates postsynaptic dendritic arbor elaboration and synaptic maturation. This chain is Neuritin-B (nrn1-b), found in Xenopus laevis (African clawed frog).